The following is a 246-amino-acid chain: Pyridoxine 5'-phosphate synthase (246 aa).

A 3-amino-2-oxopropyl phosphate-binding site is contributed by Asn12. 1-deoxy-D-xylulose 5-phosphate is bound at residue 14 to 15 (DH). Arg23 is a 3-amino-2-oxopropyl phosphate binding site. The active-site Proton acceptor is the His48. Positions 50 and 55 each coordinate 1-deoxy-D-xylulose 5-phosphate. Residue Glu75 is the Proton acceptor of the active site. Thr105 provides a ligand contact to 1-deoxy-D-xylulose 5-phosphate. His196 functions as the Proton donor in the catalytic mechanism. Residues Gly197 and 218–219 (GH) each bind 3-amino-2-oxopropyl phosphate.

It belongs to the PNP synthase family. As to quaternary structure, homooctamer; tetramer of dimers.

It is found in the cytoplasm. It catalyses the reaction 3-amino-2-oxopropyl phosphate + 1-deoxy-D-xylulose 5-phosphate = pyridoxine 5'-phosphate + phosphate + 2 H2O + H(+). It participates in cofactor biosynthesis; pyridoxine 5'-phosphate biosynthesis; pyridoxine 5'-phosphate from D-erythrose 4-phosphate: step 5/5. In terms of biological role, catalyzes the complicated ring closure reaction between the two acyclic compounds 1-deoxy-D-xylulose-5-phosphate (DXP) and 3-amino-2-oxopropyl phosphate (1-amino-acetone-3-phosphate or AAP) to form pyridoxine 5'-phosphate (PNP) and inorganic phosphate. This Pseudomonas savastanoi pv. phaseolicola (strain 1448A / Race 6) (Pseudomonas syringae pv. phaseolicola (strain 1448A / Race 6)) protein is Pyridoxine 5'-phosphate synthase.